The chain runs to 400 residues: Cytoplasmic tRNA 2-thiolation protein 2 (400 aa).

This sequence belongs to the CTU2/NCS2 family.

It is found in the cytoplasm. Its pathway is tRNA modification; 5-methoxycarbonylmethyl-2-thiouridine-tRNA biosynthesis. Plays a central role in 2-thiolation of mcm(5)S(2)U at tRNA wobble positions of tRNA(Lys), tRNA(Glu) and tRNA(Gln). May act by forming a heterodimer with NCS6/CTU1 that ligates sulfur from thiocarboxylated URM1 onto the uridine of tRNAs at wobble position. The sequence is that of Cytoplasmic tRNA 2-thiolation protein 2 from Drosophila virilis (Fruit fly).